A 380-amino-acid chain; its full sequence is Cytochrome b (380 aa).

The next 4 membrane-spanning stretches (helical) occupy residues 33-53 (FGSL…FLAM), 77-98 (WLIR…FLHV), 113-133 (WNMG…GYVL), and 178-198 (FFAF…VHLL). The heme b site is built by His83 and His97. Heme b-binding residues include His182 and His196. His201 is a binding site for a ubiquinone. 4 consecutive transmembrane segments (helical) span residues 226-246 (IKDF…VLFF), 288-308 (LGGV…PLLH), 320-340 (ITQT…WIGG), and 347-367 (FIMI…IFMP).

It belongs to the cytochrome b family. The cytochrome bc1 complex contains 11 subunits: 3 respiratory subunits (MT-CYB, CYC1 and UQCRFS1), 2 core proteins (UQCRC1 and UQCRC2) and 6 low-molecular weight proteins (UQCRH/QCR6, UQCRB/QCR7, UQCRQ/QCR8, UQCR10/QCR9, UQCR11/QCR10 and a cleavage product of UQCRFS1). This cytochrome bc1 complex then forms a dimer. It depends on heme b as a cofactor.

The protein localises to the mitochondrion inner membrane. Functionally, component of the ubiquinol-cytochrome c reductase complex (complex III or cytochrome b-c1 complex) that is part of the mitochondrial respiratory chain. The b-c1 complex mediates electron transfer from ubiquinol to cytochrome c. Contributes to the generation of a proton gradient across the mitochondrial membrane that is then used for ATP synthesis. This is Cytochrome b (MT-CYB) from Chionomys roberti (Robert's snow vole).